Reading from the N-terminus, the 489-residue chain is Probable cytochrome P450 522A1 (489 aa).

Residues Met1–Asn21 form a helical membrane-spanning segment. Cys433 is a heme binding site.

It belongs to the cytochrome P450 family. It depends on heme as a cofactor.

Its subcellular location is the membrane. This is Probable cytochrome P450 522A1 (cyp522A1) from Dictyostelium discoideum (Social amoeba).